We begin with the raw amino-acid sequence, 380 residues long: uncharacterized protein (380 aa).

HTH tetR-type domains are found at residues 3–63 (ESAE…KEGL) and 201–262 (VRTR…CAEI). Positions 225–244 (TISDITRKSNIRRATFYDHY) form a DNA-binding region, H-T-H motif.

This is an uncharacterized protein from Bacillus subtilis (strain 168).